Consider the following 227-residue polypeptide: MTAIAPVITIDGPSGAGKGTLCKAMAEALQWHLLDSGAIYRVLALAALHHHVDLASEDALVPLASHLDVRFVSTDGNLEVILEGEDVSGEIRTQEVANAASQVAAFPRVREALLRRQRAFREAPGLIADGRDMGTVVFPDAPVKIFLDASSEERAHRRMLQLQENGFSVNFERLLAEIKERDDRDRNRAVAPLVPAADALVLDSTRLSIEQVIEKALQYARQKLALA.

Position 12–20 (Gly12–Thr20) interacts with ATP.

The protein belongs to the cytidylate kinase family. Type 1 subfamily.

Its subcellular location is the cytoplasm. It carries out the reaction CMP + ATP = CDP + ADP. It catalyses the reaction dCMP + ATP = dCDP + ADP. This is Cytidylate kinase from Salmonella paratyphi B (strain ATCC BAA-1250 / SPB7).